A 557-amino-acid chain; its full sequence is D-arabinono-1,4-lactone oxidase (557 aa).

In terms of domain architecture, FAD-binding PCMH-type spans 26–209; it reads FFCKPQAIFQ…THVTLRTIPK (184 aa). H63 carries the pros-8alpha-FAD histidine modification.

Belongs to the oxygen-dependent FAD-linked oxidoreductase family. Requires FAD as cofactor.

Its subcellular location is the mitochondrion membrane. The catalysed reaction is D-arabinono-1,4-lactone + O2 = dehydro-D-arabinono-1,4-lactone + H2O2 + H(+). It participates in cofactor biosynthesis; D-erythroascorbate biosynthesis; dehydro-D-arabinono-1,4-lactone from D-arabinose: step 2/2. This is D-arabinono-1,4-lactone oxidase (ALO1) from Debaryomyces hansenii (strain ATCC 36239 / CBS 767 / BCRC 21394 / JCM 1990 / NBRC 0083 / IGC 2968) (Yeast).